A 146-amino-acid polypeptide reads, in one-letter code: D-aminoacyl-tRNA deacylase (146 aa).

The short motif at 137–138 is the Gly-cisPro motif, important for rejection of L-amino acids element; it reads GP.

The protein belongs to the DTD family. Homodimer.

The protein localises to the cytoplasm. It carries out the reaction glycyl-tRNA(Ala) + H2O = tRNA(Ala) + glycine + H(+). It catalyses the reaction a D-aminoacyl-tRNA + H2O = a tRNA + a D-alpha-amino acid + H(+). In terms of biological role, an aminoacyl-tRNA editing enzyme that deacylates mischarged D-aminoacyl-tRNAs. Also deacylates mischarged glycyl-tRNA(Ala), protecting cells against glycine mischarging by AlaRS. Acts via tRNA-based rather than protein-based catalysis; rejects L-amino acids rather than detecting D-amino acids in the active site. By recycling D-aminoacyl-tRNA to D-amino acids and free tRNA molecules, this enzyme counteracts the toxicity associated with the formation of D-aminoacyl-tRNA entities in vivo and helps enforce protein L-homochirality. In Halalkalibacterium halodurans (strain ATCC BAA-125 / DSM 18197 / FERM 7344 / JCM 9153 / C-125) (Bacillus halodurans), this protein is D-aminoacyl-tRNA deacylase.